Consider the following 233-residue polypeptide: 7-cyano-7-deazaguanine synthase (233 aa).

7 to 17 (LSGGLDSAVTS) contacts ATP. Positions 195, 206, 209, and 212 each coordinate Zn(2+).

Belongs to the QueC family. The cofactor is Zn(2+).

It carries out the reaction 7-carboxy-7-deazaguanine + NH4(+) + ATP = 7-cyano-7-deazaguanine + ADP + phosphate + H2O + H(+). The protein operates within purine metabolism; 7-cyano-7-deazaguanine biosynthesis. In terms of biological role, catalyzes the ATP-dependent conversion of 7-carboxy-7-deazaguanine (CDG) to 7-cyano-7-deazaguanine (preQ(0)). The chain is 7-cyano-7-deazaguanine synthase from Methanococcus maripaludis (strain C7 / ATCC BAA-1331).